Here is a 130-residue protein sequence, read N- to C-terminus: Anti-adapter protein IraD (130 aa).

The protein belongs to the GpW/Gp25 family. IraD subfamily. As to quaternary structure, interacts with RssB.

The protein localises to the cytoplasm. Functionally, inhibits RpoS proteolysis by regulating RssB activity, thereby increasing the stability of the sigma stress factor RpoS during oxidative stress. Its effect on RpoS stability is due to its interaction with RssB, which probably blocks the interaction of RssB with RpoS, and the consequent delivery of the RssB-RpoS complex to the ClpXP protein degradation pathway. The chain is Anti-adapter protein IraD from Escherichia coli O7:K1 (strain IAI39 / ExPEC).